The following is a 279-amino-acid chain: Undecaprenyl-diphosphatase (279 aa).

The next 7 membrane-spanning stretches (helical) occupy residues 10-30, 48-68, 96-116, 128-148, 203-223, 229-249, and 259-279; these read FICF…FLPI, LGVS…IYYF, LFIY…LIKL, GLFS…LSEI, SFLV…FSLF, IDII…IFAI, and NNTL…LTTL.

It belongs to the UppP family.

The protein resides in the cell inner membrane. The catalysed reaction is di-trans,octa-cis-undecaprenyl diphosphate + H2O = di-trans,octa-cis-undecaprenyl phosphate + phosphate + H(+). Catalyzes the dephosphorylation of undecaprenyl diphosphate (UPP). Confers resistance to bacitracin. This Prochlorococcus marinus (strain NATL1A) protein is Undecaprenyl-diphosphatase.